A 170-amino-acid polypeptide reads, in one-letter code: Large ribosomal subunit protein uL10 (170 aa).

The protein belongs to the universal ribosomal protein uL10 family. In terms of assembly, part of the ribosomal stalk of the 50S ribosomal subunit. The N-terminus interacts with L11 and the large rRNA to form the base of the stalk. The C-terminus forms an elongated spine to which L12 dimers bind in a sequential fashion forming a multimeric L10(L12)X complex.

Forms part of the ribosomal stalk, playing a central role in the interaction of the ribosome with GTP-bound translation factors. The protein is Large ribosomal subunit protein uL10 of Chlamydia abortus (strain DSM 27085 / S26/3) (Chlamydophila abortus).